Here is a 429-residue protein sequence, read N- to C-terminus: Adenosylmethionine-8-amino-7-oxononanoate aminotransferase (429 aa).

Residue Trp52 participates in substrate binding. Pyridoxal 5'-phosphate is bound at residue 112–113 (GS). Position 144 (Tyr144) interacts with substrate. Asp245 is a pyridoxal 5'-phosphate binding site. Residues Lys274 and Gly307 each coordinate substrate. Lys274 carries the N6-(pyridoxal phosphate)lysine modification. Residue 308-309 (PT) participates in pyridoxal 5'-phosphate binding. Arg391 provides a ligand contact to substrate.

The protein belongs to the class-III pyridoxal-phosphate-dependent aminotransferase family. BioA subfamily. In terms of assembly, homodimer. Pyridoxal 5'-phosphate is required as a cofactor.

The protein resides in the cytoplasm. It carries out the reaction (8S)-8-amino-7-oxononanoate + S-adenosyl-L-methionine = S-adenosyl-4-methylsulfanyl-2-oxobutanoate + (7R,8S)-7,8-diammoniononanoate. It functions in the pathway cofactor biosynthesis; biotin biosynthesis; 7,8-diaminononanoate from 8-amino-7-oxononanoate (SAM route): step 1/1. Functionally, catalyzes the transfer of the alpha-amino group from S-adenosyl-L-methionine (SAM) to 7-keto-8-aminopelargonic acid (KAPA) to form 7,8-diaminopelargonic acid (DAPA). It is the only aminotransferase known to utilize SAM as an amino donor. The chain is Adenosylmethionine-8-amino-7-oxononanoate aminotransferase from Buchnera aphidicola subsp. Baizongia pistaciae (strain Bp).